A 70-amino-acid polypeptide reads, in one-letter code: Gene 4.3 protein (70 aa).

This is Gene 4.3 protein (4.3) from Escherichia coli (Bacteriophage T3).